Reading from the N-terminus, the 163-residue chain is Lipoprotein signal peptidase (163 aa).

3 helical membrane passes run 7–27 (LSFLWLSAVAFVIDLLTKYLV), 64–84 (WQKYFFIALALIISAVLVYLL), and 99–119 (ALIIGGALANMADRAYHGFVV). Residues D120 and D138 contribute to the active site. Residues 133-153 (VFNVADIAICVGVGLLILDSF) traverse the membrane as a helical segment.

This sequence belongs to the peptidase A8 family.

It localises to the cell inner membrane. It carries out the reaction Release of signal peptides from bacterial membrane prolipoproteins. Hydrolyzes -Xaa-Yaa-Zaa-|-(S,diacylglyceryl)Cys-, in which Xaa is hydrophobic (preferably Leu), and Yaa (Ala or Ser) and Zaa (Gly or Ala) have small, neutral side chains.. The protein operates within protein modification; lipoprotein biosynthesis (signal peptide cleavage). Functionally, this protein specifically catalyzes the removal of signal peptides from prolipoproteins. In Actinobacillus succinogenes (strain ATCC 55618 / DSM 22257 / CCUG 43843 / 130Z), this protein is Lipoprotein signal peptidase.